Consider the following 169-residue polypeptide: Anaerobic nitrite reductase NSHB3 (169 aa).

Residues 15–165 (RFTEEQEALV…LVAAIKQGMK (151 aa)) form the Globin domain. Residues 48 to 52 (EVAPS) carry the Homodimerization motif. Positions 58, 72, 76, 106, 110, and 111 each coordinate heme b. The Homodimerization motif lies at 118 to 130 (DAHFEVAKFALLE).

It belongs to the plant globin family. In terms of assembly, homodimer. The cofactor is heme b.

Its subcellular location is the cytoplasm. The protein resides in the nucleus. The catalysed reaction is Fe(III)-heme b-[protein] + nitric oxide + H2O = Fe(II)-heme b-[protein] + nitrite + 2 H(+). Its function is as follows. Phytoglobin that reduces nitrite to nitric oxide under anoxic conditions (e.g. during flooding or in waterlogged soil). May not function as an oxygen storage or transport protein. Has an unusually high affinity for O(2) through an hexacoordinate heme iron because of a very low dissociation constant. The chain is Anaerobic nitrite reductase NSHB3 from Oryza sativa subsp. indica (Rice).